The following is a 311-amino-acid chain: Heme A synthase (311 aa).

The Cytoplasmic portion of the chain corresponds to 1 to 6 (MQRFIK). The helical transmembrane segment at 7–27 (WLAVITSLDLLIVLLGGALVT) threads the bilayer. Topologically, residues 28–62 (KTGSGQGCGKSWPLCNGEFVPSNLSMETIIELSHR) are extracellular. A disulfide bridge links Cys35 with Cys42. The active site involves Glu58. A heme o-binding site is contributed by His61. A helical transmembrane segment spans residues 63–83 (LTSGSAGILVTLLCILSWKYY). Residues 84 to 91 (KHVRETKT) lie on the Cytoplasmic side of the membrane. Residues 92–112 (LAILSFVFLVAQALMGAAAVV) form a helical membrane-spanning segment. Residues 113 to 121 (WGQMPAVLA) are Extracellular-facing. Residues 122 to 142 (IHFGISLISFASVILLTCLIF) form a helical membrane-spanning segment. His123 contributes to the heme o binding site. Over 143–159 (EIDQKFDARSLIMDKKM) the chain is Cytoplasmic. Residues 160–180 (KFHIYGVTIYSYIVVYTGALV) traverse the membrane as a helical segment. At 181–211 (RHERASLACPDFPLCSKNRPMPTQLHEWVQM) the chain is on the extracellular side. Cysteines 189 and 195 form a disulfide. A helical transmembrane segment spans residues 212-232 (GHRVAAMLIFAWILYAMILAI). His213 serves as a coordination point for heme b. The Cytoplasmic portion of the chain corresponds to 233-243 (RHYKQQPVVYW). Residues 244–264 (GWIISFILVTLQAVVGVLVVF) form a helical membrane-spanning segment. Topologically, residues 265 to 271 (TNASLAM) are extracellular. The chain crosses the membrane as a helical span at residues 272–292 (ALLHSLFISCLFAVLCYLVML). Residue His275 participates in heme b binding. Residues 293 to 311 (GTRIKVNAKEAGSTSKQTK) are Cytoplasmic-facing.

It belongs to the COX15/CtaA family. Type 1 subfamily. As to quaternary structure, interacts with CtaB. Heme b is required as a cofactor.

Its subcellular location is the cell membrane. The enzyme catalyses Fe(II)-heme o + 2 A + H2O = Fe(II)-heme a + 2 AH2. It functions in the pathway porphyrin-containing compound metabolism; heme A biosynthesis; heme A from heme O: step 1/1. Functionally, catalyzes the conversion of heme O to heme A by two successive hydroxylations of the methyl group at C8. The first hydroxylation forms heme I, the second hydroxylation results in an unstable dihydroxymethyl group, which spontaneously dehydrates, resulting in the formyl group of heme A. This Bacillus cereus (strain G9842) protein is Heme A synthase.